Consider the following 217-residue polypeptide: Adenylate kinase (217 aa).

Position 10 to 15 (10 to 15) interacts with ATP; the sequence is GAGKGT. Positions 30 to 59 are NMP; that stretch reads STGDMFREAVAAGTELGVKVQNILSSGALV. AMP-binding positions include Thr31, Arg36, 57 to 59, 85 to 88, and Gln92; these read ALV and GYPR. The tract at residues 126-163 is LID; the sequence is SRRICPKCGKIYNLISMPPVSDQICDDCGEQLVIREDD. Arg127 contributes to the ATP binding site. Positions 130 and 133 each coordinate Zn(2+). 136–137 is a binding site for ATP; it reads IY. The Zn(2+) site is built by Cys150 and Cys153. Positions 160 and 171 each coordinate AMP. Arg199 lines the ATP pocket.

This sequence belongs to the adenylate kinase family. Monomer.

It localises to the cytoplasm. The catalysed reaction is AMP + ATP = 2 ADP. It participates in purine metabolism; AMP biosynthesis via salvage pathway; AMP from ADP: step 1/1. Functionally, catalyzes the reversible transfer of the terminal phosphate group between ATP and AMP. Plays an important role in cellular energy homeostasis and in adenine nucleotide metabolism. The protein is Adenylate kinase of Pseudothermotoga lettingae (strain ATCC BAA-301 / DSM 14385 / NBRC 107922 / TMO) (Thermotoga lettingae).